Reading from the N-terminus, the 158-residue chain is MAFSATVSQLSSLSTISSSLPISSRRLPHRSLPQFTVKAEAEKEKQSTQGKSDGEASPAATKTPKTLPKKPVYSMKKGQIVRVEKEKYLNSINYLSVGHPPFYKGLDYIYEDRGEVLDLRVFETGEYALVGWVGIPTAPAWLPTDMLIKCEKLVYERM.

A chloroplast-targeting transit peptide spans 1–38 (MAFSATVSQLSSLSTISSSLPISSRRLPHRSLPQFTVK). The disordered stretch occupies residues 33–70 (PQFTVKAEAEKEKQSTQGKSDGEASPAATKTPKTLPKK). A compositionally biased stretch (low complexity) spans 56 to 70 (ASPAATKTPKTLPKK).

Belongs to the NDH complex subunit O family. Part of the chloroplast NDH complex, composed of a mixture of chloroplast and nucleus encoded subunits. Component of the NDH subcomplex A, at least composed of ndhH, ndhI, ndhJ, ndhK, ndhL, ndhM, ndhN and ndhO.

It is found in the plastid. The protein localises to the chloroplast thylakoid membrane. The catalysed reaction is a plastoquinone + NADH + (n+1) H(+)(in) = a plastoquinol + NAD(+) + n H(+)(out). It catalyses the reaction a plastoquinone + NADPH + (n+1) H(+)(in) = a plastoquinol + NADP(+) + n H(+)(out). NDH shuttles electrons from NAD(P)H:plastoquinone, via FMN and iron-sulfur (Fe-S) centers, to quinones in the photosynthetic chain and possibly in a chloroplast respiratory chain. The immediate electron acceptor for the enzyme in this species is believed to be plastoquinone. Couples the redox reaction to proton translocation, and thus conserves the redox energy in a proton gradient. The sequence is that of NAD(P)H-quinone oxidoreductase subunit O, chloroplastic from Arabidopsis thaliana (Mouse-ear cress).